The sequence spans 44 residues: Alpha-amylase inhibitor helianthamide (44 aa).

3 disulfide bridges follow: cysteine 6–cysteine 38, cysteine 16–cysteine 33, and cysteine 20–cysteine 39. The interval 7–10 (YIYH) is inhibitory motif.

Belongs to the sea anemone alpha-amylase inhibitor family.

The protein resides in the secreted. In terms of biological role, specific pancreatic alpha-amylase (AMY2A) inhibitor. The recombinant peptide inhibits human pancreatic (Ki=0.01 nM) and porcine pancreatic alpha-amylases (Ki=0.1 nM). In Stichodactyla helianthus (Sun anemone), this protein is Alpha-amylase inhibitor helianthamide.